Consider the following 502-residue polypeptide: Zinc finger C3HC-type protein 1 (502 aa).

A2 bears the N-acetylalanine mark. S24 bears the Phosphoserine mark. T28 bears the Phosphothreonine mark. Residues 36 to 73 form a disordered region; that stretch reads IDEGIAPEEGGVDAKDTSATSQSVNGSPQAEQPSLEST. The span at 52–72 shows a compositional bias: polar residues; the sequence is TSATSQSVNGSPQAEQPSLES. Phosphoserine is present on residues S58 and S62. The residue at position 84 (T84) is a Phosphothreonine. A C3HC-type zinc finger spans residues 102–156; it reads CAKYGWVTVECDMLKCSSCQAFLCASLQPAFDFDRYKQRCAELKKALCTAHEKFC. Residues 170–210 are F-box-like; sequence LPLDEPAILVSEFLDRFQSLCHLDLQLPSLRPEDLKTMCLT. Residues 302–423 are disordered; that stretch reads SSPIPGLEGR…SSRSFFDPTS (122 aa). A phosphoserine mark is found at S321 and S329. A compositionally biased stretch (polar residues) spans 327-338; it reads TRSQDATFSPGS. At T333 the chain carries Phosphothreonine. S335, S338, S344, S354, S359, and S370 each carry phosphoserine. Residues 351–360 are compositionally biased toward polar residues; that stretch reads RTRSWDSSSP. Positions 371 to 380 are enriched in low complexity; it reads PTTRTRPVTR. S381 carries the phosphoserine modification. T384 and T387 each carry phosphothreonine. S395 is modified (phosphoserine). Positions 396 to 402 match the Nuclear localization signal motif; sequence PLRKAKR. S407 and S483 each carry phosphoserine. The span at 407 to 422 shows a compositional bias: low complexity; the sequence is SSSSSDTSSRSFFDPT.

In terms of assembly, interacts with TPR; this interaction mediates ZC3HC1 nuclear envelopes (NE)-association but also required for proper positioning of a substantial amount of TPR at the nuclear basket (NB). Phosphorylated. May also be weakly phosphorylated on Tyr residues. As to expression, widely expressed. Highly expressed in heart, skeletal muscle and testis. Expressed in brain, placenta, lung, kidney, liver, pancreas, spleen, thymus, prostate, ovary small intestine and colon. Weakly or not expressed in leukocytes.

Its subcellular location is the nucleus. It localises to the nucleus envelope. Functionally, required for proper positioning of a substantial amount of TPR at the nuclear basket (NB) through interaction with TPR. The protein is Zinc finger C3HC-type protein 1 of Homo sapiens (Human).